The sequence spans 490 residues: ATP synthase subunit beta, chloroplastic (490 aa).

Residue threonine 6 is modified to Phosphothreonine. Serine 13 is modified (phosphoserine). 172–179 (GGAGVGKT) contacts ATP.

It belongs to the ATPase alpha/beta chains family. In terms of assembly, F-type ATPases have 2 components, CF(1) - the catalytic core - and CF(0) - the membrane proton channel. CF(1) has five subunits: alpha(3), beta(3), gamma(1), delta(1), epsilon(1). CF(0) has four main subunits: a(1), b(1), b'(1) and c(9-12).

The protein localises to the plastid. It localises to the chloroplast thylakoid membrane. The catalysed reaction is ATP + H2O + 4 H(+)(in) = ADP + phosphate + 5 H(+)(out). In terms of biological role, produces ATP from ADP in the presence of a proton gradient across the membrane. The catalytic sites are hosted primarily by the beta subunits. The protein is ATP synthase subunit beta, chloroplastic of Aethionema grandiflorum (Persian stone-cress).